A 103-amino-acid polypeptide reads, in one-letter code: Large ribosomal subunit protein uL24 (103 aa).

This sequence belongs to the universal ribosomal protein uL24 family. In terms of assembly, part of the 50S ribosomal subunit.

One of two assembly initiator proteins, it binds directly to the 5'-end of the 23S rRNA, where it nucleates assembly of the 50S subunit. Its function is as follows. One of the proteins that surrounds the polypeptide exit tunnel on the outside of the subunit. This chain is Large ribosomal subunit protein uL24, found in Enterococcus faecalis (strain ATCC 700802 / V583).